The chain runs to 194 residues: Imidazoleglycerol-phosphate dehydratase (194 aa).

Belongs to the imidazoleglycerol-phosphate dehydratase family.

The protein localises to the cytoplasm. It carries out the reaction D-erythro-1-(imidazol-4-yl)glycerol 3-phosphate = 3-(imidazol-4-yl)-2-oxopropyl phosphate + H2O. The protein operates within amino-acid biosynthesis; L-histidine biosynthesis; L-histidine from 5-phospho-alpha-D-ribose 1-diphosphate: step 6/9. The protein is Imidazoleglycerol-phosphate dehydratase of Halalkalibacterium halodurans (strain ATCC BAA-125 / DSM 18197 / FERM 7344 / JCM 9153 / C-125) (Bacillus halodurans).